The following is a 233-amino-acid chain: Orotidine 5'-phosphate decarboxylase (233 aa).

Substrate-binding positions include aspartate 13, lysine 35, 62–71, threonine 122, arginine 182, glutamine 191, glycine 211, and arginine 212; that span reads DLKFHDIPNT. Lysine 64 (proton donor) is an active-site residue.

The protein belongs to the OMP decarboxylase family. Type 1 subfamily. As to quaternary structure, homodimer.

It carries out the reaction orotidine 5'-phosphate + H(+) = UMP + CO2. Its pathway is pyrimidine metabolism; UMP biosynthesis via de novo pathway; UMP from orotate: step 2/2. In terms of biological role, catalyzes the decarboxylation of orotidine 5'-monophosphate (OMP) to uridine 5'-monophosphate (UMP). The protein is Orotidine 5'-phosphate decarboxylase of Pseudomonas putida (strain ATCC 700007 / DSM 6899 / JCM 31910 / BCRC 17059 / LMG 24140 / F1).